A 313-amino-acid polypeptide reads, in one-letter code: UDP-N-acetylglucosamine 3-dehydrogenase (313 aa).

H13, L14, and R38 together coordinate NAD(+).

It belongs to the Gfo/Idh/MocA family. In terms of assembly, exists in multiple oligomeric states.

It carries out the reaction UDP-N-acetyl-alpha-D-glucosamine + NAD(+) = UDP-2-acetamido-3-dehydro-2-deoxy-alpha-D-glucopyranose + NADH + H(+). It functions in the pathway bacterial outer membrane biogenesis; LPS lipid A biosynthesis. Functionally, oxidoreductase involved in the synthesis of 2,3-diamino-2,3-dideoxy-D-glucopyranose (GlcN3N), which is a component of lipid A in some species. Catalyzes the NAD(+)-dependent oxidation of the glucosamine 3-position of UDP-N-acetyl-glucosamine (UDP-GlcNAc) to a ketone moiety, forming UDP-2-acetamido-3-dehydro-2-deoxy-alpha-D-glucopyranose (UDP-3-oxo-GlcNAc). Is specific for UDP-GlcNAc, no activity is observed with UDP-glucose (UDP-Glc), UDP-glucoronic acid (UDP-GlcA), UDP-galactose (UDP-Gal) and UDP-N-acetylgalactosamine (UDP-GalNAc). Cannot use FAD(+) and NADP(+). This is UDP-N-acetylglucosamine 3-dehydrogenase from Acidithiobacillus ferrooxidans (strain ATCC 23270 / DSM 14882 / CIP 104768 / NCIMB 8455) (Ferrobacillus ferrooxidans (strain ATCC 23270)).